An 870-amino-acid chain; its full sequence is MOG interacting and ectopic P-granules protein 1 (870 aa).

The tract at residues 1 to 244 (MVTADETVLA…VPEEDNNEQA (244 aa)) is disordered. The span at 9–20 (LATTTNTTSMSV) shows a compositional bias: polar residues. The segment covering 41–51 (EQLKAEQREVM) has biased composition (basic and acidic residues). Composition is skewed to acidic residues over residues 77–99 (EVIE…DENG), 129–142 (IEQD…EITE), and 203–214 (IELDDDDDDEIQ). C2H2-type zinc fingers lie at residues 421–444 (HRCD…ENLH) and 450–473 (FQCT…FETH). The segment at 486–508 (YPCAICEEDFNFKGVREQHYKQC) adopts a CCHC-type zinc-finger fold. Composition is skewed to polar residues over residues 673-688 (LQAA…SQKT) and 695-708 (KLVT…VGSS). The segment at 673–708 (LQAAVNSMRSQNSQKTPTHRSSKLVTTPSHATVGSS) is disordered. C2H2-type zinc fingers lie at residues 713–736 (FVCE…QTTH), 753–776 (LACS…VMSH), 794–815 (GRCK…VADH), and 826–849 (YSCD…TSNH). A disordered region spans residues 847–870 (SNHPKGDKKTSTPAKKDDCITLDD). Residues 850–870 (PKGDKKTSTPAKKDDCITLDD) show a composition bias toward basic and acidic residues.

In terms of assembly, interacts with hda-1, let-418, lin-1, mog-1, mog-4, mog-5, mog-6, pie-1 and unc-98. In terms of processing, sumoylated. Expressed in somatic cells of embryos, the head, hypodermis and tail of larvae and the germline of adults, including oocytes but not mature sperm and spermatocytes.

It is found in the nucleus. Has a broad role in development, specifically in the genetic pathway SynMuvB that negatively regulates specification of the vulval cell fate. Required for fem-3 3'-UTR-mediated repression in the regulation of the sperm/oocyte switch. Acts by regulating the translation of fem-3 mRNA, by binding to its 3'-UTR. This is MOG interacting and ectopic P-granules protein 1 from Caenorhabditis elegans.